The chain runs to 246 residues: Histone H1 (246 aa).

Disordered regions lie at residues 1–51 and 105–246; these read MATD…PTHL and GGKL…KAKK. A compositionally biased stretch (low complexity) spans 9-34; that stretch reads PAPLVDAAPEAPADAPAAPAADANAA. The segment covering 35–47 has biased composition (basic residues); the sequence is KAKKATAPKKRAS. The H15 domain occupies 49-119; that stretch reads THLPYAEMVS…KVKNSYKLSS (71 aa). Composition is skewed to basic residues over residues 129–189 and 198–208; these read AAPK…KAKP and PLAKKAGRAKA. Residues 224–235 are compositionally biased toward low complexity; the sequence is KKAAPSKKAATP.

Belongs to the histone H1/H5 family.

Its subcellular location is the nucleus. It is found in the chromosome. Histones H1 are necessary for the condensation of nucleosome chains into higher-order structures. The sequence is that of Histone H1 from Zea mays (Maize).